A 165-amino-acid polypeptide reads, in one-letter code: MPPKFDPTEIKIVYLRCVGGEVGATSALAPKVGPLGLSPKKIGEDIAKATQDWKGLKVTCKLTIQNRVAKIDVVPSAASLIVKELKEPPRDRKKVKNVKHNGDLTVDTIIKIARIMRPRSMAKKLEGTVKEILGTAQSVGCTIDGQHPHDIIESIANGEIEIPAQ.

This sequence belongs to the universal ribosomal protein uL11 family.

Functionally, binds directly to 26S ribosomal RNA. This Caenorhabditis briggsae protein is Large ribosomal subunit protein uL11 (rpl-12).